A 70-amino-acid chain; its full sequence is Small ribosomal subunit protein bS21 (70 aa).

It belongs to the bacterial ribosomal protein bS21 family.

This chain is Small ribosomal subunit protein bS21, found in Helicobacter acinonychis (strain Sheeba).